We begin with the raw amino-acid sequence, 213 residues long: Ribosomal RNA large subunit methyltransferase E (213 aa).

Residues Gly-60, Trp-62, Asp-80, Asp-96, and Asp-121 each coordinate S-adenosyl-L-methionine. Lys-161 functions as the Proton acceptor in the catalytic mechanism.

This sequence belongs to the class I-like SAM-binding methyltransferase superfamily. RNA methyltransferase RlmE family.

Its subcellular location is the cytoplasm. It catalyses the reaction uridine(2552) in 23S rRNA + S-adenosyl-L-methionine = 2'-O-methyluridine(2552) in 23S rRNA + S-adenosyl-L-homocysteine + H(+). Functionally, specifically methylates the uridine in position 2552 of 23S rRNA at the 2'-O position of the ribose in the fully assembled 50S ribosomal subunit. The chain is Ribosomal RNA large subunit methyltransferase E from Xylella fastidiosa (strain M23).